A 365-amino-acid chain; its full sequence is Membrane cofactor protein (365 aa).

The N-terminal stretch at 1-44 is a signal peptide; that stretch reads MTAAPLMPDSTHPCRRRKSYTFFWCSLGVYAEALLFLLSHLSDA. Sushi domains follow at residues 45-106, 107-170, 171-236, and 237-296; these read CELP…GCIK, VQCT…HCEK, IYCL…ECKV, and VKCP…KCLK. The Extracellular portion of the chain corresponds to 45 to 329; sequence CELPRPFEAM…GIFSQELDAW (285 aa). 6 disulfide bridges follow: cysteine 109-cysteine 151, cysteine 137-cysteine 168, cysteine 173-cysteine 221, cysteine 202-cysteine 234, cysteine 239-cysteine 281, and cysteine 267-cysteine 294. Asparagine 181 carries N-linked (GlcNAc...) asparagine glycosylation. Threonine 205 carries an O-linked (GalNAc...) threonine glycan. Residues threonine 301 and threonine 304 are each glycosylated (O-linked (GalNAc...) threonine). A glycan (N-linked (GlcNAc...) asparagine) is linked at asparagine 310. Threonine 312 is a glycosylation site (O-linked (GalNAc...) threonine). The helical transmembrane segment at 330-350 threads the bilayer; sequence IIALIVITSIVGVFILCLIVL. At 351 to 365 the chain is on the cytoplasmic side; the sequence is RCFEHRKKTNVSAAR.

In terms of assembly, interacts with C3b. Interacts with C4b. Interacts with moesin/MSN. Post-translationally, may be O-glycosylated. In terms of processing, N-glycosylated. Present only in testis (at protein level).

The protein resides in the cytoplasmic vesicle. Its subcellular location is the secretory vesicle. It localises to the acrosome inner membrane. The protein localises to the secreted. In terms of biological role, may be involved in the fusion of the spermatozoa with the oocyte during fertilization. The protein is Membrane cofactor protein (Cd46) of Mus musculus (Mouse).